Here is a 383-residue protein sequence, read N- to C-terminus: 1-deoxy-D-xylulose 5-phosphate reductoisomerase (383 aa).

Positions 10, 11, 12, 13, 36, 37, 38, and 122 each coordinate NADPH. Position 123 (Lys123) interacts with 1-deoxy-D-xylulose 5-phosphate. Residue Glu124 coordinates NADPH. Asp148 serves as a coordination point for Mn(2+). Ser149, Glu150, Ser174, and His197 together coordinate 1-deoxy-D-xylulose 5-phosphate. Glu150 is a binding site for Mn(2+). Gly203 contributes to the NADPH binding site. 1-deoxy-D-xylulose 5-phosphate-binding residues include Ser210, Asn215, Lys216, and Glu219. Glu219 contacts Mn(2+).

The protein belongs to the DXR family. The cofactor is Mg(2+). Mn(2+) is required as a cofactor.

It carries out the reaction 2-C-methyl-D-erythritol 4-phosphate + NADP(+) = 1-deoxy-D-xylulose 5-phosphate + NADPH + H(+). It participates in isoprenoid biosynthesis; isopentenyl diphosphate biosynthesis via DXP pathway; isopentenyl diphosphate from 1-deoxy-D-xylulose 5-phosphate: step 1/6. Catalyzes the NADPH-dependent rearrangement and reduction of 1-deoxy-D-xylulose-5-phosphate (DXP) to 2-C-methyl-D-erythritol 4-phosphate (MEP). The polypeptide is 1-deoxy-D-xylulose 5-phosphate reductoisomerase (Bacillus subtilis (strain 168)).